Consider the following 248-residue polypeptide: Ubiquinone/menaquinone biosynthesis C-methyltransferase UbiE (248 aa).

S-adenosyl-L-methionine is bound by residues Ser-68 and Asp-92.

Belongs to the class I-like SAM-binding methyltransferase superfamily. MenG/UbiE family.

It carries out the reaction a 2-demethylmenaquinol + S-adenosyl-L-methionine = a menaquinol + S-adenosyl-L-homocysteine + H(+). It catalyses the reaction a 2-methoxy-6-(all-trans-polyprenyl)benzene-1,4-diol + S-adenosyl-L-methionine = a 5-methoxy-2-methyl-3-(all-trans-polyprenyl)benzene-1,4-diol + S-adenosyl-L-homocysteine + H(+). It participates in quinol/quinone metabolism; menaquinone biosynthesis; menaquinol from 1,4-dihydroxy-2-naphthoate: step 2/2. Its pathway is cofactor biosynthesis; ubiquinone biosynthesis. Methyltransferase required for the conversion of demethylmenaquinol (DMKH2) to menaquinol (MKH2) and the conversion of 2-polyprenyl-6-methoxy-1,4-benzoquinol (DDMQH2) to 2-polyprenyl-3-methyl-6-methoxy-1,4-benzoquinol (DMQH2). This is Ubiquinone/menaquinone biosynthesis C-methyltransferase UbiE from Rickettsia felis (strain ATCC VR-1525 / URRWXCal2) (Rickettsia azadi).